Reading from the N-terminus, the 301-residue chain is Transcription factor bHLH103 (301 aa).

The KRAB domain occupies 29–106 (PRSAEIVVDF…LEGLFDSSEQ (78 aa)). 2 disordered regions span residues 161–184 (EKSG…ETPS) and 239–272 (TSPH…PRQD). Residues 180–229 (LETPSHFPSFKVRKEKLGDRITALQQLVSPFGKTDTASVLHDAIDYIKFL) form the bHLH domain. Over residues 239-269 (TSPHLNSIGSGEQKQWSDKSSNNTHNQNCSP) the composition is skewed to polar residues.

Homodimer. In terms of tissue distribution, mature root endodermis.

Its subcellular location is the nucleus. The protein is Transcription factor bHLH103 (BHLH103) of Arabidopsis thaliana (Mouse-ear cress).